The following is a 436-amino-acid chain: MGQVLPLVTRQGDRIAIVSGLRTPFARQATAFHGIPAVDLGKMVVGELLARSEIPAEVIEQLVFGQVVQMPEAPNIAREIVLGTGMNVHTDAYSVSRACATSFQAVANVAESLMAGTIRAGIAGGADSSSVLPIGVSKKLAHVLVDVNKARTMSQRLKLFSRLRLRDLMPVPPAVAEYSTGLRMGDTAEQMAKTYGITREQQDALAHRSHQRAAQAWSDGKLKEEVMTAFIPPYKQPLVEDNNIRGNSSLADYAKLRPAFDRKHGTVTAANSTPLTDGAAAVILMTESRAKELGLVPLGYLRSYAFTAIDVWQDMLLGPARSTPLALERAGLTMSELTLIDMHEAFAAQTLANIQLLGSERFAREVLGRAHATGEVDDSKFNVLGGSIAYGHPFAATGARMITQTLHELRRRGGGFGLVTACAAGGLGAAMVLEAE.

Cysteine 99 acts as the Acyl-thioester intermediate in catalysis. Active-site proton acceptor residues include histidine 392 and cysteine 422.

This sequence belongs to the thiolase-like superfamily. Thiolase family. As to quaternary structure, heterotetramer of two alpha chains (FadJ) and two beta chains (FadI).

Its subcellular location is the cytoplasm. The catalysed reaction is an acyl-CoA + acetyl-CoA = a 3-oxoacyl-CoA + CoA. Its pathway is lipid metabolism; fatty acid beta-oxidation. Catalyzes the final step of fatty acid oxidation in which acetyl-CoA is released and the CoA ester of a fatty acid two carbons shorter is formed. In Shigella flexneri serotype 5b (strain 8401), this protein is 3-ketoacyl-CoA thiolase.